Here is an 862-residue protein sequence, read N- to C-terminus: Protein JOKA2 (862 aa).

Residues 6–90 (SIVIKVKYEE…NPLRISARLN (85 aa)) form the PB1 domain. Low complexity predominate over residues 92-106 (GERSGRASARSSGNS). Disordered regions lie at residues 92 to 117 (GERS…VQPP), 194 to 234 (KGNT…ASNE), and 295 to 345 (VRNS…DSSG). The segment covering 325–345 (SASSSKVKQCNWDSPNADSSG) has biased composition (polar residues). A ZZ-type; degenerate zinc finger spans residues 442 to 492 (HKGVRCDGCGVHPITGPRFISKVKENYDLCSICFAEMGNDADYIRMDRPLT). Residues C447, C450, C471, and C474 each contribute to the Zn(2+) site. Residues 811-860 (SVDDLCGVAEWDPILEELKEMGFCDKEMNKKLLKKNNGSIKRVVMDLIAG) enclose the UBA domain. The ATG8 interacting motif (AIM) motif lies at 817 to 824 (GVAEWDPI).

As to quaternary structure, interacts (via C-terminal AIM motif) with ATG8CL.

Its subcellular location is the vacuole. It localises to the cytoplasmic vesicle. It is found in the autophagosome. Its function is as follows. Autophagic substrate that functions as a host autophagy cargo receptor. Requires ATG8 protein expression to be recognized as an autophagic substrate. Activates ATG8CL-mediated selective autophagy, and contributes to defense against the fungal pathogen Phytophtora infestans. The polypeptide is Protein JOKA2 (Solanum tuberosum (Potato)).